The following is a 333-amino-acid chain: Elongation factor Ts, mitochondrial (333 aa).

A mitochondrion-targeting transit peptide spans Met-1–Tyr-17.

This sequence belongs to the EF-Ts family.

It localises to the mitochondrion. In terms of biological role, associates with the EF-Tu.GDP complex and induces the exchange of GDP to GTP. It remains bound to the aminoacyl-tRNA.EF-Tu.GTP complex up to the GTP hydrolysis stage on the ribosome. The protein is Elongation factor Ts, mitochondrial of Coprinopsis cinerea (strain Okayama-7 / 130 / ATCC MYA-4618 / FGSC 9003) (Inky cap fungus).